Here is a 629-residue protein sequence, read N- to C-terminus: Flap endonuclease GEN-like 1 (629 aa).

Residues 1 to 87 form an N-domain region; sequence MGVGGSFWDL…DGQPSPLKSQ (87 aa). Positions 2-98 are XPG-N domain; sequence GVGGSFWDLL…RAARFFRGSG (97 aa). Mg(2+) is bound by residues aspartate 31, aspartate 78, glutamate 148, glutamate 150, aspartate 169, aspartate 171, and aspartate 221. Residues 136–221 form an XPG-I domain region; that stretch reads EYLGMPVLRA…VAMALLVGSD (86 aa). An I-domain region spans residues 136-225; that stretch reads EYLGMPVLRA…LLVGSDHDLH (90 aa). Residues 221-421 are 5'-3' exonuclease domain; sequence DHDLHGVPGF…MLPMLSTIYL (201 aa). The tract at residues 594-617 is disordered; sequence KKGLSGDSGKDGSRKSSDVDLSKN. Residues 601 to 614 show a composition bias toward basic and acidic residues; it reads SGKDGSRKSSDVDL.

The protein belongs to the XPG/RAD2 endonuclease family. GEN subfamily. In terms of assembly, monomer. Interacts with PCNA. PCNA stimulates the nuclease activity without altering cleavage specificity. Mg(2+) serves as cofactor. In terms of tissue distribution, highly expressed in anthers. Expressed in roots and leaves.

It is found in the nucleus. Functionally, endonuclease which cleaves flap structures at the junction between single-stranded DNA and double-stranded DNA. Possesses both single-stranded and double-stranded DNA-binding activities. Involved in early microspore development, but does not alter meiosis or tapetal cells development. Possesses Holliday junction (HJ) resolvase activity in vitro. Cleaves HJ at symmetrically related sites of the branch point. The chain is Flap endonuclease GEN-like 1 from Oryza sativa subsp. japonica (Rice).